Reading from the N-terminus, the 166-residue chain is Cytochrome b (166 aa).

4 consecutive transmembrane segments (helical) span residues 15–35 (FKDIVGFIVMIFLLISLVLIN), 77–97 (LGGVIALVLSIAILMILPFYN), 109–129 (INQILFWIMLVTVILLTWIGA), and 136–156 (YVLLGQILTVIYFLYYLINPL).

It belongs to the cytochrome b family. In terms of assembly, the main subunits of complex b-c1 are: cytochrome b, cytochrome c1 and the Rieske protein. Requires heme as cofactor.

The protein localises to the mitochondrion inner membrane. Component of the ubiquinol-cytochrome c reductase complex (complex III or cytochrome b-c1 complex) that is part of the mitochondrial respiratory chain. The b-c1 complex mediates electron transfer from ubiquinol to cytochrome c. Contributes to the generation of a proton gradient across the mitochondrial membrane that is then used for ATP synthesis. The protein is Cytochrome b (mt:Cyt-b) of Drosophila subobscura (Fruit fly).